We begin with the raw amino-acid sequence, 380 residues long: Queuine tRNA-ribosyltransferase (380 aa).

Asp-93 (proton acceptor) is an active-site residue. Residues 93–97 (DSGGF), Asp-147, Gln-198, and Gly-225 contribute to the substrate site. Positions 256–262 (GVGLPSN) are RNA binding. Asp-275 functions as the Nucleophile in the catalytic mechanism. An RNA binding; important for wobble base 34 recognition region spans residues 280–284 (ARNGR). Zn(2+)-binding residues include Cys-313, Cys-315, Cys-318, and His-344.

Belongs to the queuine tRNA-ribosyltransferase family. As to quaternary structure, homodimer. Within each dimer, one monomer is responsible for RNA recognition and catalysis, while the other monomer binds to the replacement base PreQ1. It depends on Zn(2+) as a cofactor.

The enzyme catalyses 7-aminomethyl-7-carbaguanine + guanosine(34) in tRNA = 7-aminomethyl-7-carbaguanosine(34) in tRNA + guanine. It participates in tRNA modification; tRNA-queuosine biosynthesis. Catalyzes the base-exchange of a guanine (G) residue with the queuine precursor 7-aminomethyl-7-deazaguanine (PreQ1) at position 34 (anticodon wobble position) in tRNAs with GU(N) anticodons (tRNA-Asp, -Asn, -His and -Tyr). Catalysis occurs through a double-displacement mechanism. The nucleophile active site attacks the C1' of nucleotide 34 to detach the guanine base from the RNA, forming a covalent enzyme-RNA intermediate. The proton acceptor active site deprotonates the incoming PreQ1, allowing a nucleophilic attack on the C1' of the ribose to form the product. After dissociation, two additional enzymatic reactions on the tRNA convert PreQ1 to queuine (Q), resulting in the hypermodified nucleoside queuosine (7-(((4,5-cis-dihydroxy-2-cyclopenten-1-yl)amino)methyl)-7-deazaguanosine). The protein is Queuine tRNA-ribosyltransferase of Clostridium perfringens (strain ATCC 13124 / DSM 756 / JCM 1290 / NCIMB 6125 / NCTC 8237 / Type A).